The primary structure comprises 116 residues: UPF0102 protein ELI_05985 (116 aa).

Belongs to the UPF0102 family.

This Erythrobacter litoralis (strain HTCC2594) protein is UPF0102 protein ELI_05985.